The following is a 996-amino-acid chain: Disabled homolog 2-interacting protein (996 aa).

A C2 domain is found at Met-1–Tyr-118. One can recognise a Ras-GAP domain in the interval Gly-194 to Ile-402. Positions Leu-453–Leu-750 are necessary for interaction with AKT1. Polar residues predominate over residues Leu-460–Ala-475. 2 disordered regions span residues Leu-460–Ser-486 and Arg-522–Gln-545. The span at Ser-476–Ser-486 shows a compositional bias: low complexity. Positions Arg-522–Glu-538 are enriched in polar residues. Phosphoserine; by MAP3K5 and RIPK1 is present on Ser-535. At Ser-554 the chain carries Phosphoserine. Disordered regions lie at residues Val-611 to Leu-630, Pro-650 to Glu-672, Ser-702 to Ala-805, Glu-822 to Glu-841, and Arg-971 to Cys-996. Residues Glu-659–Glu-672 show a composition bias toward low complexity. Residues Gln-726 to Pro-738 are compositionally biased toward pro residues. Polar residues-rich tracts occupy residues Met-746–Ser-762 and Leu-774–Gly-783. A phosphoserine mark is found at Ser-785 and Ser-802. Positions Pro-830–Glu-841 are enriched in basic and acidic residues. A coiled-coil region spans residues His-832–Tyr-966. The segment covering Val-974–Cys-996 has biased composition (polar residues).

In terms of assembly, on plasma membrane, exists in an inactive form complexed with TNFR1; in response to TNF-alpha, dissociates from TNFR1 complex, translocates to cytoplasm and forms part of an intracellular signaling complex comprising TRADD, RIPK1, TRAF2 and MAP3K5. Interacts (via NPXY motif) with DAB2 (via PID domain). Interacts (via PH domain) with ERN1. Part of a cytoplasmic complex made of HIPK1, DAB2IP and MAP3K5 in response to TNF-alpha; this complex formation promotes MAP3K5-JNK activation and subsequent apoptosis. Interacts (via N-terminal domain) with JAK2; the interaction occurs in a IFNG/IFN-gamma-dependent manner and inhibits JAK2 autophosphorylation activity. Interacts (via C2 domain) with GSK3B; the interaction stimulates GSK3B kinase activation. Interacts (via C2 domain) with PPP2CA. Interacts (via proline-rich motif) with a regulatory p85 subunit (via SH3 domain) of the PI3K complex; the interaction inhibits the PI3K-AKT complex activity in a TNF-alpha-dependent manner in prostate cancer (PCa) cells. Interacts with AKT1; the interaction is increased in a TNF-alpha-induced manner. Interacts (via C2 domain and active form preferentially) with KDR/VEGFR2 (tyrosine-phosphorylated active form preferentially); the interaction occurs at the late phase of VEGFA response and inhibits KDR/VEGFR2 activity. Interacts (via N-terminus C2 domain) with MAP3K5 ('Ser-966' dephosphorylated form preferentially); the interaction occurs in a TNF-alpha-induced manner. Interacts (via Ras-GAP domain) with the catalytic subunit of protein phosphatase PP2A; the interaction occurs in resting endothelial cells, is further enhanced by TNF-alpha stimulation and is required to bridge PP2A to MAP3K5. Interacts (via C-terminus PER domain) with TRAF2 (via zinc fingers); the interaction occurs in a TNF-alpha-dependent manner. Interacts with 14-3-3 proteins; the interaction occurs in a TNF-alpha-dependent manner. Interacts (via Ras-GAP domain) with RIPK1 (via kinase domain); the interaction occurs in a TNF-alpha-dependent manner. Interacts with DAB1 and DAB2. Interacts with RAB40C; acts as a GAP for RAB40C. In response to TNF-alpha-induction, phosphorylated at Ser-535; phosphorylation leads to a conformational change, and thus, increases its association with 14-3-3 proteins, MAP3K5, RIPK1 and TRAF2 in endothelial cells; also stimulates regulatory p85 subunit sequestring and PI3K-p85 complex activity inhibition. Expressed in brain, lung, thymus, bladder and skeletal muscle. Up-regulatedd during prostate degeneration.

Its subcellular location is the cytoplasm. It localises to the cell membrane. The protein resides in the membrane. The protein localises to the cell projection. It is found in the dendrite. Functions as a scaffold protein implicated in the regulation of a large spectrum of both general and specialized signaling pathways. Involved in several processes such as innate immune response, inflammation and cell growth inhibition, apoptosis, cell survival, angiogenesis, cell migration and maturation. Also plays a role in cell cycle checkpoint control; reduces G1 phase cyclin levels resulting in G0/G1 cell cycle arrest. Mediates signal transduction by receptor-mediated inflammatory signals, such as the tumor necrosis factor (TNF), interferon (IFN) or lipopolysaccharide (LPS). Modulates the balance between phosphatidylinositol 3-kinase (PI3K)-AKT-mediated cell survival and apoptosis stimulated kinase (MAP3K5)-JNK signaling pathways; sequesters both AKT1 and MAP3K5 and counterbalances the activity of each kinase by modulating their phosphorylation status in response to pro-inflammatory stimuli. Acts as a regulator of the endoplasmic reticulum (ER) unfolded protein response (UPR) pathway; specifically involved in transduction of the ER stress-response to the JNK cascade through ERN1. Mediates TNF-alpha-induced apoptosis activation by facilitating dissociation of inhibitor 14-3-3 from MAP3K5; recruits the PP2A phosphatase complex which dephosphorylates MAP3K5 on 'Ser-966', leading to the dissociation of 13-3-3 proteins and activation of the MAP3K5-JNK signaling pathway in endothelial cells. Acts a negative regulator in the IFN-gamma-mediated JAK-STAT signaling cascade by inhibiting smooth muscle cell (VSMCs) proliferation and intimal expansion, and thus, prevents graft arteriosclerosis (GA). Acts as a GTPase-activating protein (GAP) for the ADP ribosylation factor 6 (ARF6). Promotes hydrolysis of the ARF6-bound GTP and thus, negatively regulates phosphatidylinositol 4,5-bisphosphate (PIP2)-dependent TLR4-TIRAP-MyD88 and NF-kappa-B signaling pathways in endothelial cells in response to lipopolysaccharides (LPS). Binds specifically to phosphatidylinositol 4-phosphate (PtdIns4P) and phosphatidylinositol 3-phosphate (PtdIns3P). In response to vascular endothelial growth factor (VEGFA), acts as a negative regulator of the VEGFR2-PI3K-mediated angiogenic signaling pathway by inhibiting endothelial cell migration and tube formation. In the developing brain, promotes both the transition from the multipolar to the bipolar stage and the radial migration of cortical neurons from the ventricular zone toward the superficial layer of the neocortex in a glial-dependent locomotion process. Probable downstream effector of the Reelin signaling pathway; promotes Purkinje cell (PC) dendrites development and formation of cerebellar synapses. Also functions as a tumor suppressor protein in prostate cancer progression; prevents cell proliferation and epithelial-to-mesenchymal transition (EMT) through activation of the glycogen synthase kinase-3 beta (GSK3B)-induced beta-catenin and inhibition of PI3K-AKT and Ras-MAPK survival downstream signaling cascades, respectively. Mediates TNF/TRAF2-induced MAP3K5-JNK activation, while it inhibits CHUK-NF-kappa-B signaling. Functions as a Ras GTPase-activating protein. May act as a tumor suppressor gene. This chain is Disabled homolog 2-interacting protein (Dab2ip), found in Rattus norvegicus (Rat).